The primary structure comprises 310 residues: Protein translocase subunit SecF (310 aa).

The next 6 membrane-spanning stretches (helical) occupy residues 20-42 (FKKV…IGIY), 140-160 (IEAG…YIWV), 164-184 (WYFG…ALGF), 194-214 (LSTI…SVVI), 246-266 (ILTV…GGEA), and 272-292 (VLVF…SAPI).

Belongs to the SecD/SecF family. SecF subfamily. Forms a complex with SecD. Part of the essential Sec protein translocation apparatus which comprises SecA, SecYEG and auxiliary proteins SecDF-YajC and YidC.

Its subcellular location is the cell inner membrane. Its function is as follows. Part of the Sec protein translocase complex. Interacts with the SecYEG preprotein conducting channel. SecDF uses the proton motive force (PMF) to complete protein translocation after the ATP-dependent function of SecA. The sequence is that of Protein translocase subunit SecF from Rickettsia canadensis (strain McKiel).